A 1455-amino-acid chain; its full sequence is MAGPGSWRDKEVTDLGQLPDPTGIFSLDKAIGLGTYGRIFLGIHEKTGSLVAVKVMSARKTPLPEIGRRVRVNKYQKSVGWRYSDEEEDLRTELNLLRKYSFHKNIVTFYGAFFKLNPPGHQHQLWMVMELCAAGSVTDVVRMTRNQSLKEDWIAYICREILQGLAHLHAHQVIHRDIKGQNVLLTHDAEVKIVDFGVSAQVSRTNGRRNSFIGTPYWMAPEVIHCDEDPRCSYDYRSDVWSVGITAIEMAEGAPPLCKLQPLEALCVILREAAPKVKSSGWSRKFQNFMENCMIKNFLFRPTSGNMLLHPFVHDIKNERRVVESLTKHLTGIIQKREKKGIPVAFEGEEAAKEQYITRRFRGPSCTPELLRVPTSSRCRPLRVLHGEPPQPRWLPDQEDPQDQELQQLQKAAGVFMPLHSQDNTSKLFPKQVEVAPYLRGAAQVVMPVLVQVEAPPQVSKAAQMLKSLPTQDNKATSPEVQAPVAEGQQAQHEALETEQPKDLDQVPEEFQGQDRAPEQPRQGQAAEQQQIHNPVPEQPPEEDREPEQAEVQEEAVEPPQAEIEDKEPEVVQVHAQVLLPLLSQNRHVLLPLHLDRQLLIPVGEQNEEVPRAQAWDLEASRAVGAVQALIEGLSRDLLRAPNAFVTKPLGPLQIFLENLSTDGFYTEPEPTQKKKSKVASLRKAIAKRLRPKRFRAKALWRLEDFEFSDVETSRRRRHRRWEDIFNQHEEQLRRVENDREDDSSDNDEVFHSIQAEVQIEPHAANPAGNEVHERSAPMPCNRNRTHRVKFSPSVGEEEPSLEEAQPQQQQQQPMNIRPRNCLNPQNFQAQSDSSSEEDSPVTRRKSQSSPPYSTIDQKLLIDIHVPDGFKVGKISPPVYLTNEWVGYNALSEIFWDDWIMPTRPARPPEEDGDYVELYDADANANGDEEVANGAYEDPRDGANGHDDMNNQLDQANGYEGHGAAGYNGGDVGGNHGAAFNGPRANYPRAGILKNGHNDGRALNRGAFGVFGDNAARAFHGAAGEAGAAFGNHGANRGNGRGNRNREANGRNEENGAFGRDQHVFPEFEHEESDRGTETSDSIALEITSFDGEQNSGRPVSSTTMGFPIGRSSPRGSDFGSDISYNSPILHVYEKDFSSEVYCGSLWGVNLLLGTQSHLYLMDRSGKAEIVKLIKRRPFRQIQVVEQLNLLITISGKKNRLRVYHLSWLRNKILNNDPKSKKRQKAMRKKEEACKAIDKLIGCEHFSVLQHEETTYIAVAVKSSIHLFAWAPKSFDENTAIKVFPTRDLKPLTVDLAVGSEKTLKIFFSSANGYHIIDAESEVMSEVTLPNNNVVILPDCLGLGVMLSLNAEAASEEANEQLLKKILDVWKDIPSSVAFECTKRITGWDQKAIEVRSLQSTILENELKRRSIKKLRFLCARGDKMFFASTLSNDHSRVYLMSLGKLEELHRSYAV.

Positions F25–V313 constitute a Protein kinase domain. Residues I31–I39 and K54 contribute to the ATP site. D177 functions as the Proton acceptor in the catalytic mechanism. Disordered regions lie at residues L385–Q404 and T471–E568. The span at T471 to E480 shows a compositional bias: polar residues. Residues E494–D505 are compositionally biased toward basic and acidic residues. A compositionally biased stretch (low complexity) spans Q520–Q531. Residues P540–E568 are compositionally biased toward acidic residues. Positions R716 to V750 form a coiled coil. Disordered regions lie at residues I760–S854 and A1029–S1080. Residues S847 and S850 each carry the phosphoserine modification. The segment covering A1029 to G1038 has biased composition (low complexity). Residues R1044 to E1078 are compositionally biased toward basic and acidic residues. One can recognise a CNH domain in the interval S1138–M1425.

This sequence belongs to the protein kinase superfamily. STE Ser/Thr protein kinase family. STE20 subfamily.

The enzyme catalyses L-seryl-[protein] + ATP = O-phospho-L-seryl-[protein] + ADP + H(+). It catalyses the reaction L-threonyl-[protein] + ATP = O-phospho-L-threonyl-[protein] + ADP + H(+). Functionally, may phosphorylate cofilin-1 and induce actin polymerization through this process, during the late stages of embryogenesis. Involved in the TNF-alpha-induced signaling pathway. This is Nik-related protein kinase (Nrk) from Mus musculus (Mouse).